A 288-amino-acid chain; its full sequence is Bifunctional protein FolD 2 (288 aa).

NADP(+) is bound by residues G166–S168 and S191.

Belongs to the tetrahydrofolate dehydrogenase/cyclohydrolase family. Homodimer.

The enzyme catalyses (6R)-5,10-methylene-5,6,7,8-tetrahydrofolate + NADP(+) = (6R)-5,10-methenyltetrahydrofolate + NADPH. The catalysed reaction is (6R)-5,10-methenyltetrahydrofolate + H2O = (6R)-10-formyltetrahydrofolate + H(+). It functions in the pathway one-carbon metabolism; tetrahydrofolate interconversion. In terms of biological role, catalyzes the oxidation of 5,10-methylenetetrahydrofolate to 5,10-methenyltetrahydrofolate and then the hydrolysis of 5,10-methenyltetrahydrofolate to 10-formyltetrahydrofolate. The polypeptide is Bifunctional protein FolD 2 (Myxococcus xanthus (strain DK1622)).